Here is a 201-residue protein sequence, read N- to C-terminus: Peptide deformylase 2 (201 aa).

2 residues coordinate Fe cation: Cys121 and His163. Glu164 is a catalytic residue. His167 provides a ligand contact to Fe cation.

Belongs to the polypeptide deformylase family. Fe(2+) serves as cofactor.

It carries out the reaction N-terminal N-formyl-L-methionyl-[peptide] + H2O = N-terminal L-methionyl-[peptide] + formate. Its function is as follows. Removes the formyl group from the N-terminal Met of newly synthesized proteins. Requires at least a dipeptide for an efficient rate of reaction. N-terminal L-methionine is a prerequisite for activity but the enzyme has broad specificity at other positions. This is Peptide deformylase 2 from Prochlorococcus marinus (strain MIT 9313).